The chain runs to 570 residues: Formate--tetrahydrofolate ligase (570 aa).

65 to 72 is an ATP binding site; that stretch reads TPFGEGKT.

It belongs to the formate--tetrahydrofolate ligase family.

The enzyme catalyses (6S)-5,6,7,8-tetrahydrofolate + formate + ATP = (6R)-10-formyltetrahydrofolate + ADP + phosphate. The protein operates within one-carbon metabolism; tetrahydrofolate interconversion. The protein is Formate--tetrahydrofolate ligase of Shewanella woodyi (strain ATCC 51908 / MS32).